Reading from the N-terminus, the 511-residue chain is Ribose import ATP-binding protein RbsA (511 aa).

ABC transporter domains lie at 7 to 242 (LQIS…VGRE) and 256 to 500 (CSTT…SGTQ). Residue 39-46 (GENGAGKS) participates in ATP binding.

This sequence belongs to the ABC transporter superfamily. Ribose importer (TC 3.A.1.2.1) family. The complex is composed of an ATP-binding protein (RbsA), two transmembrane proteins (RbsC) and a solute-binding protein (RbsB).

Its subcellular location is the cell inner membrane. The catalysed reaction is D-ribose(out) + ATP + H2O = D-ribose(in) + ADP + phosphate + H(+). Functionally, part of the ABC transporter complex RbsABC involved in ribose import. Responsible for energy coupling to the transport system. This is Ribose import ATP-binding protein RbsA from Ruegeria sp. (strain TM1040) (Silicibacter sp.).